We begin with the raw amino-acid sequence, 355 residues long: Poly(3-hydroxyalkanoate) polymerase subunit PhaC (355 aa).

The AB hydrolase-1 domain occupies 69–334 (PLLIVYALVN…LAFPGGHIGI (266 aa)). Cysteine 149 is an active-site residue.

This sequence belongs to the PHA/PHB synthase family. Type III PhaC subfamily. In terms of assembly, a large complex of PhaC and PhaE; the ratio of the subunits has been estimated to be from 1:1 to 4:1, with more PhaE than PhaC.

The protein localises to the cytoplasm. It catalyses the reaction (3R)-3-hydroxybutanoyl-CoA + [(3R)-hydroxybutanoate](n) = [(3R)-hydroxybutanoate](n+1) + CoA. Its pathway is biopolymer metabolism; poly-(R)-3-hydroxybutanoate biosynthesis. Polymerizes D(-)-3-hydroxybutyryl-CoA to create polyhydroxybutyrate (PHB) which consists of thousands of hydroxybutyrate molecules linked end to end. This subunit has catalytic activity that is enhanced 100-fold by PhaE, the non-catalytic subunit. This chain is Poly(3-hydroxyalkanoate) polymerase subunit PhaC, found in Allochromatium vinosum (strain ATCC 17899 / DSM 180 / NBRC 103801 / NCIMB 10441 / D) (Chromatium vinosum).